A 77-amino-acid polypeptide reads, in one-letter code: Secapin (77 aa).

An N-terminal signal peptide occupies residues 1–32 (MKNYSKNATHLITVLLFSFVVILLIIPSKCEA). Residues 33–52 (VSNDMQPLEARSADLIPEPR) constitute a propeptide that is removed on maturation. Cysteine 61 and cysteine 72 are oxidised to a cystine.

It belongs to the secapin family. Expressed by the venom gland.

It is found in the secreted. Functionally, nontoxic peptide. This chain is Secapin, found in Vespa velutina nigrithorax (Hornet).